We begin with the raw amino-acid sequence, 291 residues long: UPF0276 protein VV3194 (291 aa).

Belongs to the UPF0276 family.

The chain is UPF0276 protein VV3194 from Vibrio vulnificus (strain YJ016).